Consider the following 249-residue polypeptide: ATP synthase subunit a, chloroplastic (249 aa).

5 helical membrane-spanning segments follow: residues 40-60 (QVLI…VLAV), 97-117 (VPFI…GALL), 136-156 (INTT…AGLS), 201-221 (LVVV…VMFL), and 222-242 (GLFT…AYIG).

The protein belongs to the ATPase A chain family. As to quaternary structure, F-type ATPases have 2 components, CF(1) - the catalytic core - and CF(0) - the membrane proton channel. CF(1) has five subunits: alpha(3), beta(3), gamma(1), delta(1), epsilon(1). CF(0) has four main subunits: a, b, b' and c.

The protein resides in the plastid. Its subcellular location is the chloroplast thylakoid membrane. Its function is as follows. Key component of the proton channel; it plays a direct role in the translocation of protons across the membrane. In Arabis hirsuta (Hairy rock-cress), this protein is ATP synthase subunit a, chloroplastic.